Here is a 248-residue protein sequence, read N- to C-terminus: 2,3-bisphosphoglycerate-dependent phosphoglycerate mutase (248 aa).

Residues 8 to 15 (RHGESLWN), 21 to 22 (TG), R60, 87 to 90 (ERHY), K98, 114 to 115 (RR), and 183 to 184 (GN) each bind substrate. H9 serves as the catalytic Tele-phosphohistidine intermediate. Residue E87 is the Proton donor/acceptor of the active site.

It belongs to the phosphoglycerate mutase family. BPG-dependent PGAM subfamily.

It catalyses the reaction (2R)-2-phosphoglycerate = (2R)-3-phosphoglycerate. Its pathway is carbohydrate degradation; glycolysis; pyruvate from D-glyceraldehyde 3-phosphate: step 3/5. Functionally, catalyzes the interconversion of 2-phosphoglycerate and 3-phosphoglycerate. The sequence is that of 2,3-bisphosphoglycerate-dependent phosphoglycerate mutase from Methanospirillum hungatei JF-1 (strain ATCC 27890 / DSM 864 / NBRC 100397 / JF-1).